Here is a 318-residue protein sequence, read N- to C-terminus: NADH-ubiquinone oxidoreductase chain 1 (318 aa).

8 consecutive transmembrane segments (helical) span residues 2–22 (FLINVLTVTLPILPAVAFLTL), 69–89 (FLFTVAPILALTLALTVWAPL), 102–122 (LLFILAMSSLMVYSILWSGWA), 146–166 (MTTITLSMVLMNGSFTLTAFA), 171–191 (HLWLIFPMWPLMMMWFTSTLA), 222–242 (LFFMAEYANIIMMNALTVILF), 253–273 (EISTINFVMKTIILTICFLWV), and 294–314 (LPLTLALCMWHISILISLACI).

It belongs to the complex I subunit 1 family. Core subunit of respiratory chain NADH dehydrogenase (Complex I) which is composed of 45 different subunits.

It is found in the mitochondrion inner membrane. The catalysed reaction is a ubiquinone + NADH + 5 H(+)(in) = a ubiquinol + NAD(+) + 4 H(+)(out). Core subunit of the mitochondrial membrane respiratory chain NADH dehydrogenase (Complex I) which catalyzes electron transfer from NADH through the respiratory chain, using ubiquinone as an electron acceptor. Essential for the catalytic activity and assembly of complex I. This Elephas maximus (Indian elephant) protein is NADH-ubiquinone oxidoreductase chain 1 (MT-ND1).